The primary structure comprises 356 residues: DNA polymerase IV (356 aa).

Positions 6 to 187 (IIHIDMDYFF…LDIGDFPGVG (182 aa)) constitute a UmuC domain. The Mg(2+) site is built by aspartate 10 and aspartate 105. Glutamate 106 is a catalytic residue.

Belongs to the DNA polymerase type-Y family. Monomer. Mg(2+) is required as a cofactor.

The protein localises to the cytoplasm. It catalyses the reaction DNA(n) + a 2'-deoxyribonucleoside 5'-triphosphate = DNA(n+1) + diphosphate. Poorly processive, error-prone DNA polymerase involved in untargeted mutagenesis. Copies undamaged DNA at stalled replication forks, which arise in vivo from mismatched or misaligned primer ends. These misaligned primers can be extended by PolIV. Exhibits no 3'-5' exonuclease (proofreading) activity. May be involved in translesional synthesis, in conjunction with the beta clamp from PolIII. In Staphylococcus aureus (strain COL), this protein is DNA polymerase IV.